Consider the following 658-residue polypeptide: Probable Xaa-Pro aminopeptidase P (658 aa).

4 residues coordinate Mn(2+): aspartate 449, aspartate 460, glutamate 558, and glutamate 572.

It belongs to the peptidase M24B family. Mn(2+) serves as cofactor.

It carries out the reaction Release of any N-terminal amino acid, including proline, that is linked to proline, even from a dipeptide or tripeptide.. Functionally, catalyzes the removal of a penultimate prolyl residue from the N-termini of peptides. In Aspergillus clavatus (strain ATCC 1007 / CBS 513.65 / DSM 816 / NCTC 3887 / NRRL 1 / QM 1276 / 107), this protein is Probable Xaa-Pro aminopeptidase P (ampp).